Consider the following 162-residue polypeptide: Cytochrome c-type biogenesis protein CcmE (162 aa).

The Cytoplasmic portion of the chain corresponds to 1 to 13 (MSFWPQSRKARRR). Residues 14 to 34 (LTILLAIAPVLALAVGLALYG) traverse the membrane as a helical; Signal-anchor for type II membrane protein segment. The Periplasmic portion of the chain corresponds to 35–162 (LRDSISLFYT…DAPAYGSQKP (128 aa)). Heme is bound by residues histidine 128 and tyrosine 132. Positions 140 to 151 (ALKEQGEWRGEG) are enriched in basic and acidic residues. The segment at 140-162 (ALKEQGEWRGEGADAPAYGSQKP) is disordered.

This sequence belongs to the CcmE/CycJ family.

It localises to the cell inner membrane. Functionally, heme chaperone required for the biogenesis of c-type cytochromes. Transiently binds heme delivered by CcmC and transfers the heme to apo-cytochromes in a process facilitated by CcmF and CcmH. The chain is Cytochrome c-type biogenesis protein CcmE from Caulobacter vibrioides (strain ATCC 19089 / CIP 103742 / CB 15) (Caulobacter crescentus).